Consider the following 429-residue polypeptide: Tol-Pal system protein TolB (429 aa).

The first 28 residues, 1–28 (MSITPSFSRRSVVSLLAAGAFSSMSAFA), serve as a signal peptide directing secretion.

This sequence belongs to the TolB family. As to quaternary structure, the Tol-Pal system is composed of five core proteins: the inner membrane proteins TolA, TolQ and TolR, the periplasmic protein TolB and the outer membrane protein Pal. They form a network linking the inner and outer membranes and the peptidoglycan layer.

It localises to the periplasm. Part of the Tol-Pal system, which plays a role in outer membrane invagination during cell division and is important for maintaining outer membrane integrity. This is Tol-Pal system protein TolB from Polaromonas naphthalenivorans (strain CJ2).